Reading from the N-terminus, the 104-residue chain is Class I hydrophobin 12 (104 aa).

The signal sequence occupies residues 1–25 (MFSKATLFFTAAVVIVAAGATPTTS). 4 disulfides stabilise this stretch: Cys27–Cys85, Cys34–Cys79, Cys35–Cys67, and Cys86–Cys99.

It belongs to the fungal hydrophobin family. Self-assembles to form functional amyloid fibrils called rodlets. Self-assembly into fibrillar rodlets occurs spontaneously at hydrophobic:hydrophilic interfaces and the rodlets further associate laterally to form amphipathic monolayers.

It is found in the secreted. The protein localises to the cell wall. In terms of biological role, aerial growth, conidiation, and dispersal of filamentous fungi in the environment rely upon a capability of their secreting small amphipathic proteins called hydrophobins (HPBs) with low sequence identity. Class I can self-assemble into an outermost layer of rodlet bundles on aerial cell surfaces, conferring cellular hydrophobicity that supports fungal growth, development and dispersal; whereas Class II form highly ordered films at water-air interfaces through intermolecular interactions but contribute nothing to the rodlet structure. Hydph12 is a class I hydrophobin involved in the formation of mycelium knots. This Pleurotus ostreatus (strain PC15) (Oyster mushroom) protein is Class I hydrophobin 12.